The following is a 140-amino-acid chain: Nucleoside diphosphate kinase (140 aa).

Lys-11, Phe-59, Arg-87, Thr-93, Arg-104, and Asn-114 together coordinate ATP. The Pros-phosphohistidine intermediate role is filled by His-117.

Belongs to the NDK family. In terms of assembly, homotetramer. Mg(2+) serves as cofactor.

The protein resides in the cytoplasm. The catalysed reaction is a 2'-deoxyribonucleoside 5'-diphosphate + ATP = a 2'-deoxyribonucleoside 5'-triphosphate + ADP. It carries out the reaction a ribonucleoside 5'-diphosphate + ATP = a ribonucleoside 5'-triphosphate + ADP. Functionally, major role in the synthesis of nucleoside triphosphates other than ATP. The ATP gamma phosphate is transferred to the NDP beta phosphate via a ping-pong mechanism, using a phosphorylated active-site intermediate. This Francisella tularensis subsp. mediasiatica (strain FSC147) protein is Nucleoside diphosphate kinase.